The chain runs to 176 residues: MDLPGPIHDFLLVFLGSGLLVGGLGVVLLPNPIFSAFSLGFVLVCISLLYILSNSHFVAAAQLLIYVGAINVLIIFAVMFMNDSEYSTDFNLWTVGNGITSLVCTTILFLLMSTILDTSWYGVIWTTRLNQILEQDLISNSQQIGIHLSTDFFLPFELISIILLVALIGAISVARQ.

5 helical membrane-spanning segments follow: residues 10–30, 32–52, 61–81, 92–112, and 152–172; these read FLLVFLGSGLLVGGLGVVLLP, PIFSAFSLGFVLVCISLLYIL, AQLLIYVGAINVLIIFAVMFM, LWTVGNGITSLVCTTILFLLM, and FFLPFELISIILLVALIGAIS.

It belongs to the complex I subunit 6 family. In terms of assembly, NDH is composed of at least 16 different subunits, 5 of which are encoded in the nucleus.

The protein localises to the plastid. The protein resides in the chloroplast thylakoid membrane. The enzyme catalyses a plastoquinone + NADH + (n+1) H(+)(in) = a plastoquinol + NAD(+) + n H(+)(out). It catalyses the reaction a plastoquinone + NADPH + (n+1) H(+)(in) = a plastoquinol + NADP(+) + n H(+)(out). In terms of biological role, NDH shuttles electrons from NAD(P)H:plastoquinone, via FMN and iron-sulfur (Fe-S) centers, to quinones in the photosynthetic chain and possibly in a chloroplast respiratory chain. The immediate electron acceptor for the enzyme in this species is believed to be plastoquinone. Couples the redox reaction to proton translocation, and thus conserves the redox energy in a proton gradient. This chain is NAD(P)H-quinone oxidoreductase subunit 6, chloroplastic (ndhG), found in Olimarabidopsis pumila (Dwarf rocket).